Consider the following 621-residue polypeptide: Alpha-actinin-like protein 1 (621 aa).

Calponin-homology (CH) domains follow at residues 8-114 (SVQN…LRFT) and 123-230 (LTAK…HAFS). The actin-binding stretch occupies residues 86–110 (LTNIGPADIVDGNLKLILGLIWTLI). 3 EF-hand domains span residues 388–419 (LSTI…LGPL), 487–549 (DGIT…EIVM), and 550–618 (EELE…AEDK).

Belongs to the alpha-actinin family.

Its subcellular location is the cytoplasm. The protein resides in the cytoskeleton. In terms of biological role, binds to actin and is involved in actin-ring formation and organization. Plays a role in cytokinesis and is involved in septation. In Schizosaccharomyces pombe (strain 972 / ATCC 24843) (Fission yeast), this protein is Alpha-actinin-like protein 1 (ain1).